We begin with the raw amino-acid sequence, 120 residues long: MLPSRYRLRRSSDFKAVLRRGRRVAGRYIVVYLSTSDTDRPGPQAGFVVGRNVGGAVVRNRIRRRLRHIVAARLAVIPARKRIVVRALPAAAAASFAELAAEFDRLLGRLTQTKNSQGTS.

It belongs to the RnpA family. In terms of assembly, consists of a catalytic RNA component (M1 or rnpB) and a protein subunit.

The catalysed reaction is Endonucleolytic cleavage of RNA, removing 5'-extranucleotides from tRNA precursor.. Its function is as follows. RNaseP catalyzes the removal of the 5'-leader sequence from pre-tRNA to produce the mature 5'-terminus. It can also cleave other RNA substrates such as 4.5S RNA. The protein component plays an auxiliary but essential role in vivo by binding to the 5'-leader sequence and broadening the substrate specificity of the ribozyme. The polypeptide is Ribonuclease P protein component (Acidothermus cellulolyticus (strain ATCC 43068 / DSM 8971 / 11B)).